Reading from the N-terminus, the 381-residue chain is Beta-lactamase CMY-4 (381 aa).

The N-terminal stretch at 1–20 is a signal peptide; that stretch reads MMKKSLCCALLLTASFSTFA. Serine 84 functions as the Acyl-ester intermediate in the catalytic mechanism. Positions 84, 140, 170, and 172 each coordinate a beta-lactam.

The protein belongs to the class-C beta-lactamase family.

The catalysed reaction is a beta-lactam + H2O = a substituted beta-amino acid. Its function is as follows. Class C beta-lactamase which confers resistance to penicillins and cephalosporins. This is Beta-lactamase CMY-4 from Klebsiella pneumoniae.